A 309-amino-acid polypeptide reads, in one-letter code: Taste receptor type 2 member 46 (309 aa).

Met-1 is a topological domain (extracellular). Residues 2–22 (ITFLPIIFSILIVVTFVIGNF) traverse the membrane as a helical segment. Residues 23–46 (ANGFIALANSIEWFKRQKISFADQ) lie on the Cytoplasmic side of the membrane. The chain crosses the membrane as a helical span at residues 47–67 (ILTALAVSRVGLLWVLLLNWY). The Extracellular segment spans residues 68–86 (ATELNPAFYSIEVRITAYN). Residues 87–107 (LWAVINHFSNWLATSLSIFYL) traverse the membrane as a helical segment. The Cytoplasmic segment spans residues 108–126 (LKIANFSNLIFLCLKRRVK). The helical transmembrane segment at 127–147 (SVVLVILLGPLLFLVCHLFVI) threads the bilayer. The Extracellular portion of the chain corresponds to 148–178 (NMNQIIWTKEYEGNMTWKIKLRSAMYLSNTT). N-linked (GlcNAc...) asparagine glycosylation is found at Asn-161 and Asn-176. A helical transmembrane segment spans residues 179 to 199 (VTILANLVPFTLTLISFLLLI). Residues 200–229 (CSLCKHLEKMQLHGKGSQDPSMKVHIKALQ) are Cytoplasmic-facing. A helical transmembrane segment spans residues 230–250 (TVTSFLLLCAIYFLSIIMSVW). At 251–259 (SFESLENKP) the chain is on the extracellular side. Residues 260–280 (VFMFCEAITFSYPSTHPFILI) form a helical membrane-spanning segment. Topologically, residues 281-309 (WGNKKLKQTFLSVLWHVRYWVKGEKPSXP) are cytoplasmic.

It belongs to the G-protein coupled receptor T2R family.

The protein localises to the membrane. It localises to the cell projection. The protein resides in the cilium membrane. Functionally, receptor that may play a role in the perception of bitterness and is gustducin-linked. May play a role in sensing the chemical composition of the gastrointestinal content. The activity of this receptor may stimulate alpha gustducin, mediate PLC-beta-2 activation and lead to the gating of TRPM5. In airway epithelial cells, binding of bitter compounds increases the intracellular calcium ion concentration and stimulates ciliary beat frequency. The protein is Taste receptor type 2 member 46 (TAS2R46) of Pan troglodytes (Chimpanzee).